We begin with the raw amino-acid sequence, 434 residues long: Gamma-enolase (434 aa).

Substrate contacts are provided by His158 and Glu167. Catalysis depends on Glu210, which acts as the Proton donor. 3 residues coordinate Mg(2+): Asp245, Glu293, and Asp318. Residues Glu293 and Asp318 each contribute to the substrate site. Lys343 functions as the Proton acceptor in the catalytic mechanism. Substrate-binding positions include 370-373 (SHRS) and Lys394.

The protein belongs to the enolase family. In terms of assembly, homodimer. Mg(2+) is required as a cofactor. As to expression, expressed in the brain and, to much less but significant extents, in the pituitary and adrenal glands.

The protein resides in the cytoplasm. It catalyses the reaction (2R)-2-phosphoglycerate = phosphoenolpyruvate + H2O. The protein operates within carbohydrate degradation; glycolysis; pyruvate from D-glyceraldehyde 3-phosphate: step 4/5. The sequence is that of Gamma-enolase (ENO2) from Gallus gallus (Chicken).